The following is a 293-amino-acid chain: Acetyl-coenzyme A carboxylase carboxyl transferase subunit beta (293 aa).

The 265-residue stretch at 29–293 (LWSKCPECGQ…GCKPMELTSA (265 aa)) folds into the CoA carboxyltransferase N-terminal domain. Residues Cys-33, Cys-36, Cys-52, and Cys-55 each contribute to the Zn(2+) site. A C4-type zinc finger spans residues 33 to 55 (CPECGQVVYLKDLKLNASVCANC).

Belongs to the AccD/PCCB family. As to quaternary structure, acetyl-CoA carboxylase is a heterohexamer composed of biotin carboxyl carrier protein (AccB), biotin carboxylase (AccC) and two subunits each of ACCase subunit alpha (AccA) and ACCase subunit beta (AccD). The cofactor is Zn(2+).

The protein resides in the cytoplasm. The enzyme catalyses N(6)-carboxybiotinyl-L-lysyl-[protein] + acetyl-CoA = N(6)-biotinyl-L-lysyl-[protein] + malonyl-CoA. It participates in lipid metabolism; malonyl-CoA biosynthesis; malonyl-CoA from acetyl-CoA: step 1/1. In terms of biological role, component of the acetyl coenzyme A carboxylase (ACC) complex. Biotin carboxylase (BC) catalyzes the carboxylation of biotin on its carrier protein (BCCP) and then the CO(2) group is transferred by the transcarboxylase to acetyl-CoA to form malonyl-CoA. The polypeptide is Acetyl-coenzyme A carboxylase carboxyl transferase subunit beta (Synechococcus sp. (strain CC9605)).